The following is a 747-amino-acid chain: Elongation factor G, mitochondrial (747 aa).

The N-terminal 32 residues, 1 to 32, are a transit peptide targeting the mitochondrion; sequence MTLITRVLNSNLPLRLSALKTVRQLQCGYSSH. Residues 42–319 form the tr-type G domain; the sequence is ERIRNIGISA…AIIDYLPNPG (278 aa). Residues 51 to 58, 118 to 122, and 172 to 175 each bind GTP; these read AHIDSGKT, DTPGH, and NKLD.

Belongs to the TRAFAC class translation factor GTPase superfamily. Classic translation factor GTPase family. EF-G/EF-2 subfamily.

It localises to the mitochondrion. Its pathway is protein biosynthesis; polypeptide chain elongation. Mitochondrial GTPase that catalyzes the GTP-dependent ribosomal translocation step during translation elongation. During this step, the ribosome changes from the pre-translocational (PRE) to the post-translocational (POST) state as the newly formed A-site-bound peptidyl-tRNA and P-site-bound deacylated tRNA move to the P and E sites, respectively. Catalyzes the coordinated movement of the two tRNA molecules, the mRNA and conformational changes in the ribosome. Essential during development as it acts as a retrograde signal from mitochondria to the nucleus to slow down cell proliferation if mitochondrial energy output is low. The protein is Elongation factor G, mitochondrial of Drosophila virilis (Fruit fly).